Here is a 521-residue protein sequence, read N- to C-terminus: Apolipoprotein N-acyltransferase (521 aa).

The next 6 helical transmembrane spans lie at Leu-34–Val-54, Ala-64–Leu-84, Leu-100–Leu-120, Leu-137–Phe-157, Val-176–Ala-196, and Tyr-206–Ala-226. A CN hydrolase domain is found at Ile-240–Leu-480. Glu-281 acts as the Proton acceptor in catalysis. Lys-341 is a catalytic residue. The Nucleophile role is filled by Cys-392. The chain crosses the membrane as a helical span at residues Ala-488–Ala-508.

This sequence belongs to the CN hydrolase family. Apolipoprotein N-acyltransferase subfamily.

It localises to the cell inner membrane. It carries out the reaction N-terminal S-1,2-diacyl-sn-glyceryl-L-cysteinyl-[lipoprotein] + a glycerophospholipid = N-acyl-S-1,2-diacyl-sn-glyceryl-L-cysteinyl-[lipoprotein] + a 2-acyl-sn-glycero-3-phospholipid + H(+). The protein operates within protein modification; lipoprotein biosynthesis (N-acyl transfer). Catalyzes the phospholipid dependent N-acylation of the N-terminal cysteine of apolipoprotein, the last step in lipoprotein maturation. This is Apolipoprotein N-acyltransferase from Gloeobacter violaceus (strain ATCC 29082 / PCC 7421).